The following is a 221-amino-acid chain: Small ribosomal subunit protein uS3 (221 aa).

The KH type-2 domain occupies 39 to 107 (IREYIKRKLY…QVHVNIVEVK (69 aa)).

Belongs to the universal ribosomal protein uS3 family. Part of the 30S ribosomal subunit. Forms a tight complex with proteins S10 and S14.

In terms of biological role, binds the lower part of the 30S subunit head. Binds mRNA in the 70S ribosome, positioning it for translation. This Desulforamulus reducens (strain ATCC BAA-1160 / DSM 100696 / MI-1) (Desulfotomaculum reducens) protein is Small ribosomal subunit protein uS3.